Consider the following 508-residue polypeptide: MAATPPSSQHRRPLSSSASAASLAGKPRGGGLLLGRYELGRLLGHGTFAKVYQARSADSGEPVAIKVLDKEKAMRHGLVPHIKREIAILRRVRHPNIVRLFEVMATKSKIYFVMELVRGGELFGRVAKGRLKEDTARRYFQQLVSAVGFCHARGVFHRDLKPENLLVDEHGDLKVSDFGLSAVADQFHPDGLLHTFCGTPSYVAPEVLARRGYDGAKADIWSCGIILFVLMAGYLPFHDQNLMAMYRKIYRGEFRCPRWFSKDLSSLLNRILDTNPETRITVKEVMESRWFQKGFRPVRFYVEDDQVHSLADGDNDMPELEPSEPPPPPPFPPPPPQQDDDGEESGWESDSSVASCPATLSSEERRQRPLGSLTRPASLNAFDIISFSKGFDLSGLFEERGSEVRFISAEPMQTIITKLEEIAKVKSFFVRRKDWRVSIEGTREGLKGPLTIGAEIFELTPSLVVVEVKKKAGDKEEYDDFCNRELKPGMQHLVHHMGSVPNIPSDTE.

Positions 1-24 (MAATPPSSQHRRPLSSSASAASLA) are disordered. Residues 14 to 24 (LSSSASAASLA) show a composition bias toward low complexity. In terms of domain architecture, Protein kinase spans 37–291 (YELGRLLGHG…VKEVMESRWF (255 aa)). ATP is bound by residues 43–51 (LGHGTFAKV) and Lys-66. Asp-159 acts as the Proton acceptor in catalysis. Residues 177–206 (DFGLSAVADQFHPDGLLHTFCGTPSYVAPE) are activation loop. Positions 311–372 (ADGDNDMPEL…EERRQRPLGS (62 aa)) are disordered. Acidic residues predominate over residues 313-322 (GDNDMPELEP). Positions 323-337 (SEPPPPPPFPPPPPQ) are enriched in pro residues. Over residues 338-347 (QDDDGEESGW) the composition is skewed to acidic residues. In terms of domain architecture, NAF spans 354–398 (ASCPATLSSEERRQRPLGSLTRPASLNAFDIISFSKGFDLSGLFE). The tract at residues 401-430 (GSEVRFISAEPMQTIITKLEEIAKVKSFFV) is PPI.

The protein belongs to the protein kinase superfamily. CAMK Ser/Thr protein kinase family. SNF1 subfamily. The cofactor is Mn(2+). In terms of processing, autophosphorylated. In terms of tissue distribution, expressed in roots, leaf blades and sheaths and panicles.

The catalysed reaction is L-seryl-[protein] + ATP = O-phospho-L-seryl-[protein] + ADP + H(+). It catalyses the reaction L-threonyl-[protein] + ATP = O-phospho-L-threonyl-[protein] + ADP + H(+). Its function is as follows. CIPK serine-threonine protein kinases interact with CBL proteins. Binding of a CBL protein to the regulatory NAF domain of CIPK protein lead to the activation of the kinase in a calcium-dependent manner. The protein is CBL-interacting protein kinase 19 (CIPK19) of Oryza sativa subsp. japonica (Rice).